A 458-amino-acid chain; its full sequence is UDP-glycosyltransferase 76G1 (458 aa).

Catalysis depends on His-25, which acts as the Proton acceptor. His-25 serves as a coordination point for rebaudioside A. His-25 provides a ligand contact to rubusoside. A UDP-binding site is contributed by Asn-27. The active-site Charge relay is the Asp-124. Rebaudioside A contacts are provided by residues 146–147 and His-155; that span reads TS. Residues Ser-283, 338–339, and 356–364 contribute to the UDP site; these read WV and HSGWNSTLE. Rebaudioside A is bound by residues Trp-359 and 380–381; that span reads DQ.

Belongs to the UDP-glycosyltransferase family. In terms of assembly, monomer.

It carries out the reaction steviolbioside + UDP-alpha-D-glucose = rebaudioside B + UDP + H(+). It catalyses the reaction stevioside + UDP-alpha-D-glucose = rebaudioside A + UDP + H(+). The catalysed reaction is rebaudioside E + UDP-alpha-D-glucose = rebaudioside D + UDP + H(+). The enzyme catalyses rebaudioside D + UDP-alpha-D-glucose = rebaudioside M + UDP + H(+). In terms of biological role, involved in the biosynthesis of steviol glycosides in leaves. Converts the di-glycoside steviolbioside to the tri-glycoside rebaudioside B. Converts the tri-glycoside stevioside to the tetra-glycoside rebaudioside A. Converts the tetra-glycoside rebaudioside E to the penta-glycoside rebaudioside D. Converts the penta-glycoside rebaudioside D to the hexa-glycoside rebaudioside M. Can glucosylate rubusoside and rebaudioside A in vitro. The protein is UDP-glycosyltransferase 76G1 of Stevia rebaudiana (Stevia).